The chain runs to 887 residues: Microsomal triglyceride transfer protein large subunit (887 aa).

The first 11 residues, 1–11, serve as a signal peptide directing secretion; it reads FLCFISSYSAS. The Vitellogenin domain maps to 21–655; the sequence is LNNDRLYKLT…YIEKTPLHGI (635 aa). The cysteines at positions 167 and 187 are disulfide-linked.

Heterodimer; heterodimerizes with the protein disulfide isomerase (P4HB/PDI). Interacts with APOB. Interacts with PRAP1.

The protein localises to the endoplasmic reticulum. Its subcellular location is the golgi apparatus. It carries out the reaction a 1,2-diacyl-sn-glycero-3-phosphocholine(in) = a 1,2-diacyl-sn-glycero-3-phosphocholine(out). The catalysed reaction is a 1,2-diacyl-sn-glycero-3-phosphoethanolamine(in) = a 1,2-diacyl-sn-glycero-3-phosphoethanolamine(out). It catalyses the reaction a cholesterol ester(in) = a cholesterol ester(out). The enzyme catalyses a triacyl-sn-glycerol(in) = a triacyl-sn-glycerol(out). Its function is as follows. Catalyzes the transport of triglyceride, cholesteryl ester, and phospholipid between phospholipid surfaces. Required for the assembly and secretion of plasma lipoproteins that contain apolipoprotein B. May be involved in regulating cholesteryl ester biosynthesis in cells that produce lipoproteins. This Bos taurus (Bovine) protein is Microsomal triglyceride transfer protein large subunit (MTTP).